An 87-amino-acid polypeptide reads, in one-letter code: Small ribosomal subunit protein uS17 (87 aa).

This sequence belongs to the universal ribosomal protein uS17 family. Part of the 30S ribosomal subunit.

In terms of biological role, one of the primary rRNA binding proteins, it binds specifically to the 5'-end of 16S ribosomal RNA. This chain is Small ribosomal subunit protein uS17, found in Macrococcus caseolyticus (strain JCSC5402) (Macrococcoides caseolyticum).